The primary structure comprises 741 residues: Mitofusin-1 (741 aa).

The Cytoplasmic segment spans residues 1–584 (MAEPVSPLKH…ASQEELMITL (584 aa)). The segment at 9–73 (KHFVLAKKAI…LSIIGEVLSR (65 aa)) is part of a helix bundle domain, formed by helices from N-terminal and C-terminal regions. The 250-residue stretch at 72–321 (SRRHMKVAFF…ARLQEFQNFE (250 aa)) folds into the Dynamin-type G domain. Residues 82–89 (GRTSSGKS) form a G1 motif region. 85 to 90 (SSGKSS) contributes to the GTP binding site. Residues 108-109 (IT) form a G2 motif region. The tract at residues 178 to 181 (DSPG) is G3 motif. 237–240 (NRWD) contributes to the GTP binding site. Residues 237 to 240 (NRWD) are G4 motif. Residue Glu266 is a region of interest, G5 motif. GTP-binding residues include Ser284 and Lys286. Positions 338 to 364 (EQHTIRAKQILATVKNIMDSVNLAAED) are part of a helix bundle domain, formed by helices from N-terminal and C-terminal regions. Positions 371 to 408 (EEREDQIDRLDFIRNQMNLLTLDVKKKIKEVTEEVANK) form a coiled coil. The helical transmembrane segment at 585-605 (VTGLASVTSRTSMGIIIVGGV) threads the bilayer. Topologically, residues 606-608 (IWK) are mitochondrial intermembrane. A helical transmembrane segment spans residues 609-629 (TIGWKLLSVSLTMYGALYLYE). The Cytoplasmic segment spans residues 630–741 (RLSWTTHAKE…QFLPSSNEES (112 aa)). Residues 679–734 (RLCQQVDITQKQLEEEIARLPKEIDQLEKIQNNSKLLRNKAVQLENELENFTKQFL) are a coiled coil. The segment at 703-734 (DQLEKIQNNSKLLRNKAVQLENELENFTKQFL) is part of a helix bundle domain, formed by helices from N-terminal and C-terminal regions.

This sequence belongs to the TRAFAC class dynamin-like GTPase superfamily. Dynamin/Fzo/YdjA family. Mitofusin subfamily. In terms of assembly, homodimer, also in the absence of bound GTP. Forms higher oligomers in the presence of a transition state GTP analog. Forms homomultimers and heteromultimers with MFN2. Oligomerization is essential for mitochondrion fusion. Component of a high molecular weight multiprotein complex. Interacts with VAT1. Interacts with THG1L; THG1L probably functions as a guanyl-nucleotide exchange factor/GEF, activating MFN1. Ubiquitinated by non-degradative ubiquitin by PRKN. Deubiquitination by USP30 inhibits mitochondrial fusion. Ubiquitinated by MARCHF5. When mitochondria are depolarized and dysfunctional, it is ubiquitinated by a SCF (SKP1-CUL1-F-box protein) E3 ubiquitin-protein ligase complex that contains FBXO7 and PRKN. In terms of tissue distribution, detected in kidney and heart (at protein level). Ubiquitous. Expressed at slightly higher level in kidney and heart. Isoform 2 may be overexpressed in some tumors, such as lung cancers.

Its subcellular location is the mitochondrion outer membrane. It localises to the cytoplasm. The catalysed reaction is GTP + H2O = GDP + phosphate + H(+). Its function is as follows. Mitochondrial outer membrane GTPase that mediates mitochondrial clustering and fusion. Membrane clustering requires GTPase activity. It may involve a major rearrangement of the coiled coil domains. Mitochondria are highly dynamic organelles, and their morphology is determined by the equilibrium between mitochondrial fusion and fission events. Overexpression induces the formation of mitochondrial networks (in vitro). Has low GTPase activity. The sequence is that of Mitofusin-1 (MFN1) from Homo sapiens (Human).